The chain runs to 101 residues: Small ribosomal subunit protein uS14 (101 aa).

This sequence belongs to the universal ribosomal protein uS14 family. Part of the 30S ribosomal subunit. Contacts proteins S3 and S10.

Functionally, binds 16S rRNA, required for the assembly of 30S particles and may also be responsible for determining the conformation of the 16S rRNA at the A site. This is Small ribosomal subunit protein uS14 from Francisella tularensis subsp. holarctica (strain FTNF002-00 / FTA).